A 905-amino-acid chain; its full sequence is Protein translocase subunit SecA (905 aa).

Residues Gln89, 107 to 111 (GEGKT), and Asp502 each bind ATP. Positions 889, 891, 900, and 901 each coordinate Zn(2+).

It belongs to the SecA family. As to quaternary structure, monomer and homodimer. Part of the essential Sec protein translocation apparatus which comprises SecA, SecYEG and auxiliary proteins SecDF-YajC and YidC. Zn(2+) serves as cofactor.

The protein localises to the cell inner membrane. The protein resides in the cytoplasm. The enzyme catalyses ATP + H2O + cellular proteinSide 1 = ADP + phosphate + cellular proteinSide 2.. Part of the Sec protein translocase complex. Interacts with the SecYEG preprotein conducting channel. Has a central role in coupling the hydrolysis of ATP to the transfer of proteins into and across the cell membrane, serving both as a receptor for the preprotein-SecB complex and as an ATP-driven molecular motor driving the stepwise translocation of polypeptide chains across the membrane. The protein is Protein translocase subunit SecA of Bartonella tribocorum (strain CIP 105476 / IBS 506).